A 433-amino-acid polypeptide reads, in one-letter code: Meiotically up-regulated gene 131 protein (433 aa).

Polar residues predominate over residues 401 to 412 (LSSQGREISNTL). The disordered stretch occupies residues 401–433 (LSSQGREISNTLSRKRGAKGSNPFEIENMMPHA).

This sequence belongs to the UPF0300 family.

The protein localises to the golgi apparatus. Its function is as follows. Has a role in meiosis. In Schizosaccharomyces pombe (strain 972 / ATCC 24843) (Fission yeast), this protein is Meiotically up-regulated gene 131 protein (mug131).